The primary structure comprises 955 residues: Leucine--tRNA ligase (955 aa).

The 'HIGH' region signature appears at 51–61 (PYLNGVLHAGH). The 'KMSKS' region motif lies at 647–651 (KLSKS). Residue Lys650 coordinates ATP.

This sequence belongs to the class-I aminoacyl-tRNA synthetase family.

The protein localises to the cytoplasm. The enzyme catalyses tRNA(Leu) + L-leucine + ATP = L-leucyl-tRNA(Leu) + AMP + diphosphate. The polypeptide is Leucine--tRNA ligase (Methanococcus maripaludis (strain C5 / ATCC BAA-1333)).